Here is a 142-residue protein sequence, read N- to C-terminus: Large ribosomal subunit protein uL13 (142 aa).

Belongs to the universal ribosomal protein uL13 family. In terms of assembly, part of the 50S ribosomal subunit.

This protein is one of the early assembly proteins of the 50S ribosomal subunit, although it is not seen to bind rRNA by itself. It is important during the early stages of 50S assembly. In Francisella philomiragia subsp. philomiragia (strain ATCC 25017 / CCUG 19701 / FSC 153 / O#319-036), this protein is Large ribosomal subunit protein uL13.